We begin with the raw amino-acid sequence, 585 residues long: Arginine--tRNA ligase (585 aa).

The short motif at 131–141 is the 'HIGH' region element; the sequence is ANPTGPMHVGH.

It belongs to the class-I aminoacyl-tRNA synthetase family. Monomer.

The protein localises to the cytoplasm. It catalyses the reaction tRNA(Arg) + L-arginine + ATP = L-arginyl-tRNA(Arg) + AMP + diphosphate. This chain is Arginine--tRNA ligase, found in Agrobacterium fabrum (strain C58 / ATCC 33970) (Agrobacterium tumefaciens (strain C58)).